We begin with the raw amino-acid sequence, 361 residues long: Phosphoserine aminotransferase (361 aa).

Arginine 42 provides a ligand contact to L-glutamate. Residues 76–77, tryptophan 102, threonine 153, aspartate 173, and glutamine 196 contribute to the pyridoxal 5'-phosphate site; that span reads AR. Lysine 197 carries the N6-(pyridoxal phosphate)lysine modification. Position 238–239 (238–239) interacts with pyridoxal 5'-phosphate; sequence NT.

The protein belongs to the class-V pyridoxal-phosphate-dependent aminotransferase family. SerC subfamily. Homodimer. Requires pyridoxal 5'-phosphate as cofactor.

Its subcellular location is the cytoplasm. It catalyses the reaction O-phospho-L-serine + 2-oxoglutarate = 3-phosphooxypyruvate + L-glutamate. The enzyme catalyses 4-(phosphooxy)-L-threonine + 2-oxoglutarate = (R)-3-hydroxy-2-oxo-4-phosphooxybutanoate + L-glutamate. Its pathway is amino-acid biosynthesis; L-serine biosynthesis; L-serine from 3-phospho-D-glycerate: step 2/3. It functions in the pathway cofactor biosynthesis; pyridoxine 5'-phosphate biosynthesis; pyridoxine 5'-phosphate from D-erythrose 4-phosphate: step 3/5. Its function is as follows. Catalyzes the reversible conversion of 3-phosphohydroxypyruvate to phosphoserine and of 3-hydroxy-2-oxo-4-phosphonooxybutanoate to phosphohydroxythreonine. The polypeptide is Phosphoserine aminotransferase (Buchnera aphidicola subsp. Acyrthosiphon pisum (strain Tuc7)).